A 533-amino-acid polypeptide reads, in one-letter code: Probable ribonuclease ZC3H12D (533 aa).

The RNase NYN domain maps to 92–246 (LRPIVIDGSN…PLGRRGPTLS (155 aa)). The C3H1-type zinc-finger motif lies at 251–282 (KKPRPPEPSWQHCPYGKKCTYGVKCRFYHPER). The tract at residues 262–368 (HCPYGKKCTY…ASGVVSQSRG (107 aa)) is necessary for interaction with ZC3H12A. Residues 302–335 (LGGGAEEPRTPSARSRPTTARLLPQEPGEHDLPP) are disordered.

The protein belongs to the ZC3H12 family. In terms of assembly, interacts with ZC3H12A. Mg(2+) is required as a cofactor. In terms of tissue distribution, expressed at low levels in bone marrow derived macrophages.

The protein resides in the cytoplasm. It is found in the P-body. Functionally, may regulate cell growth likely by suppressing RB1 phosphorylation. May function as RNase and regulate the levels of target RNA species (Potential). In association with ZC3H12A enhances the degradation of interleukin IL-6 mRNA level in activated macrophages. Serve as a tumor suppressor in certain leukemia cells. Overexpression inhibits the G1 to S phase progression through suppression of RB1 phosphorylation. The polypeptide is Probable ribonuclease ZC3H12D (Mus musculus (Mouse)).